The primary structure comprises 429 residues: Glucose-1-phosphate adenylyltransferase (429 aa).

Alpha-D-glucose 1-phosphate is bound by residues glycine 162, 177–178, and serine 209; that span reads EK.

This sequence belongs to the bacterial/plant glucose-1-phosphate adenylyltransferase family. In terms of assembly, homotetramer.

It catalyses the reaction alpha-D-glucose 1-phosphate + ATP + H(+) = ADP-alpha-D-glucose + diphosphate. The protein operates within glycan biosynthesis; glycogen biosynthesis. Functionally, involved in the biosynthesis of ADP-glucose, a building block required for the elongation reactions to produce glycogen. Catalyzes the reaction between ATP and alpha-D-glucose 1-phosphate (G1P) to produce pyrophosphate and ADP-Glc. The polypeptide is Glucose-1-phosphate adenylyltransferase (Nostoc punctiforme (strain ATCC 29133 / PCC 73102)).